The chain runs to 192 residues: Pyridoxal 5'-phosphate synthase subunit PdxT (192 aa).

46–48 (GES) contributes to the L-glutamine binding site. C76 acts as the Nucleophile in catalysis. L-glutamine-binding positions include R103 and 131–132 (IR). Active-site charge relay system residues include H167 and E169.

This sequence belongs to the glutaminase PdxT/SNO family. As to quaternary structure, in the presence of PdxS, forms a dodecamer of heterodimers. Only shows activity in the heterodimer.

The catalysed reaction is aldehydo-D-ribose 5-phosphate + D-glyceraldehyde 3-phosphate + L-glutamine = pyridoxal 5'-phosphate + L-glutamate + phosphate + 3 H2O + H(+). It carries out the reaction L-glutamine + H2O = L-glutamate + NH4(+). The protein operates within cofactor biosynthesis; pyridoxal 5'-phosphate biosynthesis. Functionally, catalyzes the hydrolysis of glutamine to glutamate and ammonia as part of the biosynthesis of pyridoxal 5'-phosphate. The resulting ammonia molecule is channeled to the active site of PdxS. This Koribacter versatilis (strain Ellin345) protein is Pyridoxal 5'-phosphate synthase subunit PdxT.